The chain runs to 1202 residues: MANLLQRLRRRTGPKPDYIEDKLDEYIREEQVEETGGSNQDCPLGEIEKILDREWRPTASNNPNSSDNGTPTLVVVKQYLVKWKGLSYLHCSWVPEQEFEKAYKSHPHLKLKLRVTRFNAAMDVFIAENGAHEFIAIRPEWKTVDRIIACREGDDGEEYLVKYKELSYRNSYWESESDISDFQNEIQRFKDINSSSRRDKYVENERNREEFKQFDLTPEFLTGTLHTYQLEGLNFLRYSWSKKTNVILADEMGLGKTIQSIAFLASLFEENLSPHLVVAPLSTIRNWEREFATWAPHMNVVMYTGDSEARDVIWEHEFYFSEGRKSKFDVLLTTYEMVHPGISVLSPIKWTCMIIDEGHRLKNQKSKLYSSLSQFTSKHIVLLTGTPLQNNLNELFALMHFLDADKFGSLEKFQDINKEEQISRLHQMLAPHLLRRLKKDVLKDKVPPKKELILRVDMSSQQKEVYKAVITNNYQVLTKKRDAKISNVLMKLRQVCSHPYLLPDFEPRFEDANEAFTKLLEASGKLQLLDKMMVKLKEQGHRVLIYTQFQHTLYLLEDYFTFKNWNYERIDGKISGPERQVRIDRFNAENSNRFCFLLSTRAGGIGINLATADTVIIYDSDWNPHADLQAMARVHRLGQTNKVMIYRLIHKGTVEERMMEITKNKMLLEHLVVGKQHLCQDELDDIIKYGSKELFSEENDEAGRSGKIHYDDAAIEQLLDRNHVDAVEVSLDDEEETDFLKNFKVASFEYVDDENEAAALEEAQAIENNSSVRNADRTSHWKDLLKDKYEVQQAEELSALGKRKRNGKQVMYAEDDLDGLEEISDEEDEYCLDDLKVTSDEEEEADEPEAARQRKPRTVTRPYRKRARDNSEEIPLMEGEGRYLMVLGFNETERDIFLRTFKRYGAGNFDWKEFVNPLYMKTYDEINKYGILFLKHIAENPTDNSTNFKVITAMVYADGVPKEGISSDELLVSMTFMMLVKEKCQFLDNHPTAPVFSNYVISKYNLRNGAFSKEEHDRILIPAVSKHGYGRWVAIVEDEEIGFQEVACKDLNIPFPPDTKSARKRICDHVGKRVKKMEDAIKYEYAEKILAEQAKAETKGTSFVDAEKEMLKNDPITSKKNSATAVDNKQGRVEMAQSYDQSVNEKSGESFQTYLDIQPLNRMPRESFKPLEPINEEISTRLSVGTDHDVEMDAADNIIVLD.

Chromo domains lie at 45-109 (GEIE…HPHL) and 142-201 (KTVD…RDKY). The Helicase ATP-binding domain maps to 237 to 405 (RYSWSKKTNV…FALMHFLDAD (169 aa)). 250–257 (DEMGLGKT) is a binding site for ATP. Residues 356–359 (DEGH) carry the DEAH box motif. The 152-residue stretch at 528 to 679 (LLDKMMVKLK…HLVVGKQHLC (152 aa)) folds into the Helicase C-terminal domain. Residues 838-872 (TSDEEEEADEPEAARQRKPRTVTRPYRKRARDNSE) form a disordered region. Over residues 853–867 (QRKPRTVTRPYRKRA) the composition is skewed to basic residues.

This sequence belongs to the SNF2/RAD54 helicase family.

Its subcellular location is the nucleus. Functionally, chromatin remodeling factor that represses the expression of embryonic trait genes upon and after seed germination and thus enables the developmental switch to post-germinative growth. This Arabidopsis thaliana (Mouse-ear cress) protein is CHD3-type chromatin-remodeling factor CHR7.